A 20-amino-acid chain; its full sequence is Pregnancy-associated glycoprotein 57 (20 aa).

The protein belongs to the peptidase A1 family. In terms of processing, glycosylated.

Its subcellular location is the secreted. The protein is Pregnancy-associated glycoprotein 57 of Ovis aries (Sheep).